The following is a 368-amino-acid chain: 3-dehydroquinate synthase (368 aa).

NAD(+) contacts are provided by residues 69-74 (DGEAYK), 103-107 (GVIGD), 127-128 (TT), lysine 140, and lysine 149. Residues glutamate 182, histidine 245, and histidine 262 each contribute to the Zn(2+) site.

This sequence belongs to the sugar phosphate cyclases superfamily. Dehydroquinate synthase family. The cofactor is Co(2+). Requires Zn(2+) as cofactor. NAD(+) is required as a cofactor.

Its subcellular location is the cytoplasm. The enzyme catalyses 7-phospho-2-dehydro-3-deoxy-D-arabino-heptonate = 3-dehydroquinate + phosphate. Its pathway is metabolic intermediate biosynthesis; chorismate biosynthesis; chorismate from D-erythrose 4-phosphate and phosphoenolpyruvate: step 2/7. Functionally, catalyzes the conversion of 3-deoxy-D-arabino-heptulosonate 7-phosphate (DAHP) to dehydroquinate (DHQ). This is 3-dehydroquinate synthase from Pseudomonas aeruginosa (strain LESB58).